We begin with the raw amino-acid sequence, 129 residues long: Large ribosomal subunit protein uL14m (129 aa).

It belongs to the universal ribosomal protein uL14 family. Component of the mitochondrial ribosome large subunit (39S) which comprises a 16S rRNA and about 50 distinct proteins.

It localises to the mitochondrion. The sequence is that of Large ribosomal subunit protein uL14m (mrpl14) from Dictyostelium discoideum (Social amoeba).